A 213-amino-acid chain; its full sequence is Orotate phosphoribosyltransferase (213 aa).

Lys26 contributes to the 5-phospho-alpha-D-ribose 1-diphosphate binding site. Phe34–Phe35 is a binding site for orotate. 5-phospho-alpha-D-ribose 1-diphosphate is bound by residues Tyr72–Lys73, Arg99, Lys100, Lys103, His105, and Asp124–Ala132. Orotate contacts are provided by Thr128 and Arg156.

The protein belongs to the purine/pyrimidine phosphoribosyltransferase family. PyrE subfamily. In terms of assembly, homodimer. It depends on Mg(2+) as a cofactor.

It carries out the reaction orotidine 5'-phosphate + diphosphate = orotate + 5-phospho-alpha-D-ribose 1-diphosphate. It functions in the pathway pyrimidine metabolism; UMP biosynthesis via de novo pathway; UMP from orotate: step 1/2. Its function is as follows. Catalyzes the transfer of a ribosyl phosphate group from 5-phosphoribose 1-diphosphate to orotate, leading to the formation of orotidine monophosphate (OMP). The polypeptide is Orotate phosphoribosyltransferase (Shigella dysenteriae serotype 1 (strain Sd197)).